Here is a 249-residue protein sequence, read N- to C-terminus: Sugar fermentation stimulation protein homolog (249 aa).

It belongs to the SfsA family.

This is Sugar fermentation stimulation protein homolog from Synechococcus sp. (strain CC9902).